Here is a 192-residue protein sequence, read N- to C-terminus: Imidazoleglycerol-phosphate dehydratase (192 aa).

Belongs to the imidazoleglycerol-phosphate dehydratase family.

Its subcellular location is the cytoplasm. The catalysed reaction is D-erythro-1-(imidazol-4-yl)glycerol 3-phosphate = 3-(imidazol-4-yl)-2-oxopropyl phosphate + H2O. It functions in the pathway amino-acid biosynthesis; L-histidine biosynthesis; L-histidine from 5-phospho-alpha-D-ribose 1-diphosphate: step 6/9. The chain is Imidazoleglycerol-phosphate dehydratase from Caldivirga maquilingensis (strain ATCC 700844 / DSM 13496 / JCM 10307 / IC-167).